Here is a 338-residue protein sequence, read N- to C-terminus: DNA-directed RNA polymerase subunit alpha (338 aa).

The interval Met-1 to Asn-226 is alpha N-terminal domain (alpha-NTD). The tract at residues Asp-240–Tyr-338 is alpha C-terminal domain (alpha-CTD).

Belongs to the RNA polymerase alpha chain family. In terms of assembly, homodimer. The RNAP catalytic core consists of 2 alpha, 1 beta, 1 beta' and 1 omega subunit. When a sigma factor is associated with the core the holoenzyme is formed, which can initiate transcription.

It carries out the reaction RNA(n) + a ribonucleoside 5'-triphosphate = RNA(n+1) + diphosphate. DNA-dependent RNA polymerase catalyzes the transcription of DNA into RNA using the four ribonucleoside triphosphates as substrates. The chain is DNA-directed RNA polymerase subunit alpha from Nocardioides sp. (strain ATCC BAA-499 / JS614).